Here is a 410-residue protein sequence, read N- to C-terminus: Angiopoietin-related protein 4 (410 aa).

A signal peptide spans 1–23 (MRCAPTAGAALMLCAATAGLLSA). Residues 81–106 (KDPEGSAAPPRAQANLVNPGGGDASP) form a disordered region. A coiled-coil region spans residues 107-155 (ETLRSLKTQLEAQNSRIQQLFQKVAQQQRHLEKQQLRIQNLQSQMDHLA). N184 carries N-linked (GlcNAc...) asparagine glycosylation. A Fibrinogen C-terminal domain is found at 186 to 408 (SRLHRLPRDC…ATTILVQPTA (223 aa)). Intrachain disulfides connect C195/C223 and C348/C361.

Homooligomer; disulfide-linked via Cys residues in the N-terminal part of the protein. The homooligomer undergoes proteolytic processing to release the ANGPTL4 C-terminal chain, which circulates as a monomer. The homooligomer unprocessed form is able to interact with the extracellular matrix. Post-translationally, N-glycosylated. Forms disulfide-linked dimers and tetramers. In terms of processing, cleaved into a smaller N-terminal chain and a larger chain that contains the fibrinogen C-terminal domain; both cleaved and uncleaved forms are detected in the extracellular space. The cleaved form is not present within the cell.

It localises to the secreted. The protein localises to the extracellular space. The protein resides in the extracellular matrix. Its function is as follows. Mediates inactivation of the lipoprotein lipase LPL, and thereby plays a role in the regulation of triglyceride clearance from the blood serum and in lipid metabolism. May also play a role in regulating glucose homeostasis and insulin sensitivity. Inhibits proliferation, migration, and tubule formation of endothelial cells and reduces vascular leakage. Upon heterologous expression, inhibits the adhesion of endothelial cell to the extracellular matrix (ECM), and inhibits the reorganization of the actin cytoskeleton, formation of actin stress fibers and focal adhesions in endothelial cells that have adhered to ANGPTL4-containing ECM (in vitro). Depending on context, may modulate tumor-related angiogenesis. Mediates inactivation of the lipoprotein lipase LPL, and thereby plays an important role in the regulation of triglyceride clearance from the blood serum and in lipid metabolism. Has higher activity in LPL inactivation than the uncleaved protein. This is Angiopoietin-related protein 4 (ANGPTL4) from Bos taurus (Bovine).